Here is a 685-residue protein sequence, read N- to C-terminus: Kinesin-related protein 11 (685 aa).

One can recognise a Kinesin motor domain in the interval 4-405 (NISVSVRARP…LKFASRAKKI (402 aa)). The disordered stretch occupies residues 36–105 (TSLPPPITQP…TTVPASPAPT (70 aa)). Over residues 47–105 (SSLPPISTPIKSSSSSSTSTSAGSLKTPLKTPLKTPLKTPLKTNSTTTNTTVPASPAPT) the composition is skewed to low complexity. 156 to 163 (GITSSGKT) contacts ATP. Positions 411–488 (VNEILDDKAL…KINNLNKLIL (78 aa)) form a coiled coil. Residues 495 to 568 (NSASKGGSGS…QSTSSLTIGG (74 aa)) are disordered. The segment covering 511-520 (RSTFVSPSQN) has biased composition (polar residues). Residues 533–565 (PNSFSNLLLQSPSQNNNNNSHISPLSQSTSSLT) are compositionally biased toward low complexity. The stretch at 574-683 (FESNELIQIQ…LKSKIQEYEV (110 aa)) forms a coiled coil.

Belongs to the TRAFAC class myosin-kinesin ATPase superfamily. Kinesin family.

The protein resides in the cytoplasm. It localises to the cytoskeleton. Functionally, microtubule-associated force-producing protein that plays a role in organelle transport. Its motor activity is directed toward the microtubule's plus end. This chain is Kinesin-related protein 11 (kif11), found in Dictyostelium discoideum (Social amoeba).